Here is a 341-residue protein sequence, read N- to C-terminus: UDP-3-O-acylglucosamine N-acyltransferase (341 aa).

The active-site Proton acceptor is the His241.

The protein belongs to the transferase hexapeptide repeat family. LpxD subfamily. Homotrimer.

The enzyme catalyses a UDP-3-O-[(3R)-3-hydroxyacyl]-alpha-D-glucosamine + a (3R)-hydroxyacyl-[ACP] = a UDP-2-N,3-O-bis[(3R)-3-hydroxyacyl]-alpha-D-glucosamine + holo-[ACP] + H(+). It functions in the pathway bacterial outer membrane biogenesis; LPS lipid A biosynthesis. In terms of biological role, catalyzes the N-acylation of UDP-3-O-acylglucosamine using 3-hydroxyacyl-ACP as the acyl donor. Is involved in the biosynthesis of lipid A, a phosphorylated glycolipid that anchors the lipopolysaccharide to the outer membrane of the cell. In Haemophilus ducreyi (strain 35000HP / ATCC 700724), this protein is UDP-3-O-acylglucosamine N-acyltransferase.